The primary structure comprises 1362 residues: Bromodomain-containing protein 4B (1362 aa).

Disordered regions lie at residues Glu22–Arg57, Ser200–Ala243, Leu274–Thr367, Asp476–Glu639, Cys699–Pro941, and Ser953–Gln1349. Residues Gln34–Ile49 show a composition bias toward pro residues. The Bromo 1 domain maps to Arg57–Met163. Over residues Thr219–Thr234 the composition is skewed to pro residues. A compositionally biased stretch (basic and acidic residues) spans Pro326–Val342. A compositionally biased stretch (pro residues) spans Pro348–Ala358. A Bromo 2 domain is found at Ser365 to Met474. A compositionally biased stretch (pro residues) spans Ala481–Thr503. The tract at residues Thr503 to Ser521 is NPS region. The segment covering Ser504–Glu516 has biased composition (low complexity). The segment at Gln542 to Gly597 is BID region. Over residues Lys553 to Arg568 the composition is skewed to basic residues. The segment covering Lys569–Ala585 has biased composition (basic and acidic residues). The span at Pro606–Pro621 shows a compositional bias: pro residues. The region spanning Glu623 to Gln707 is the NET domain. The span at Asp628–Glu639 shows a compositional bias: basic and acidic residues. Low complexity predominate over residues Ser722 to Ser737. Positions Gln750–Pro766 are enriched in basic residues. 2 stretches are compositionally biased toward pro residues: residues Ile772–Ser793 and Pro871–Gln889. A compositionally biased stretch (basic residues) spans His893 to Gln905. A compositionally biased stretch (polar residues) spans Tyr926–Pro941. 4 stretches are compositionally biased toward low complexity: residues Ser953–Ser963, Ser977–Gly1006, Gln1014–Gln1028, and His1041–Ile1050. A C-terminal (CTD) region region spans residues Arg1061 to Phe1361. The span at Gln1086–Pro1099 shows a compositional bias: pro residues. Residues Pro1186 to Ile1207 show a composition bias toward basic and acidic residues. Polar residues predominate over residues Pro1224–Ser1234. The segment covering Glu1236–Glu1293 has biased composition (basic and acidic residues). Residues Pro1308 to Pro1319 show a composition bias toward low complexity. Residues Asp1322–Arg1334 are compositionally biased toward basic and acidic residues.

It belongs to the BET family.

It localises to the nucleus. It is found in the chromosome. Chromatin reader protein that recognizes and binds acetylated histones and plays a key role in transmission of epigenetic memory across cell divisions and transcription regulation. Remains associated with acetylated chromatin throughout the entire cell cycle and provides epigenetic memory for postmitotic G1 gene transcription by preserving acetylated chromatin status and maintaining high-order chromatin structure. During interphase, plays a key role in regulating the transcription of signal-inducible genes by associating with the P-TEFb complex and recruiting it to promoters. This is Bromodomain-containing protein 4B (brd4-b) from Xenopus laevis (African clawed frog).